A 151-amino-acid polypeptide reads, in one-letter code: Gene 55 protein (151 aa).

In Mycobacterium phage D29 (Mycobacteriophage D29), this protein is Gene 55 protein (55).